Reading from the N-terminus, the 295-residue chain is Nucleotide-binding protein BLi03725/BL03417 (295 aa).

G16–T23 serves as a coordination point for ATP. D67 to G70 contributes to the GTP binding site.

It belongs to the RapZ-like family.

Displays ATPase and GTPase activities. This Bacillus licheniformis (strain ATCC 14580 / DSM 13 / JCM 2505 / CCUG 7422 / NBRC 12200 / NCIMB 9375 / NCTC 10341 / NRRL NRS-1264 / Gibson 46) protein is Nucleotide-binding protein BLi03725/BL03417.